We begin with the raw amino-acid sequence, 159 residues long: UPF0699 transmembrane protein YdbS (159 aa).

The next 2 helical transmembrane spans lie at 22-42 (IIIS…SYYF) and 47-67 (WISG…VFII).

Belongs to the UPF0699 family.

It is found in the cell membrane. In Bacillus subtilis (strain 168), this protein is UPF0699 transmembrane protein YdbS (ydbS).